The chain runs to 156 residues: Ribosome maturation factor RimP (156 aa).

Belongs to the RimP family.

It localises to the cytoplasm. Functionally, required for maturation of 30S ribosomal subunits. The chain is Ribosome maturation factor RimP from Halalkalibacterium halodurans (strain ATCC BAA-125 / DSM 18197 / FERM 7344 / JCM 9153 / C-125) (Bacillus halodurans).